The following is a 124-amino-acid chain: MKNVLIIFGKPYCSICENVSDAVEELKSEYDILHVDILSFFLKDGDSSMLGDVKRGTLIGNFAAHLSNYIVSIFKYNPQTKQMAFVDINKSLDFTKTDKSLVNLEILKSEIEKANYGVWPPVTE.

An intrachain disulfide couples Cys13 to Cys16.

The protein belongs to the glutaredoxin family. Homodimer.

It localises to the host cytoplasm. Glutaredoxin necessary for virion morphogenesis and virus replication. Functions as a thiol-disulfide transfer protein between membrane-associated OPG128 and substrates OPG095 or OPG053. The complete pathway for formation of disulfide bonds in intracellular virion membrane proteins sequentially involves oxidation of OPG072, OPG128 and OPG088. Exhibit thioltransferase and dehydroascorbate reductase activities in vitro. The sequence is that of Glutaredoxin-2 (OPG088) from Homo sapiens (Human).